A 462-amino-acid polypeptide reads, in one-letter code: Adenosylhomocysteinase (462 aa).

Substrate-binding residues include Thr55, Asp128, and Glu188. 189–191 is an NAD(+) binding site; the sequence is TTT. 2 residues coordinate substrate: Lys218 and Asp222. Residues Asn223, 252–257, Glu275, Asn310, 331–333, and Asn376 each bind NAD(+); these read GYGDVG and IGH.

The protein belongs to the adenosylhomocysteinase family. Requires NAD(+) as cofactor.

The protein localises to the cytoplasm. The enzyme catalyses S-adenosyl-L-homocysteine + H2O = L-homocysteine + adenosine. It functions in the pathway amino-acid biosynthesis; L-homocysteine biosynthesis; L-homocysteine from S-adenosyl-L-homocysteine: step 1/1. Its function is as follows. May play a key role in the regulation of the intracellular concentration of adenosylhomocysteine. In Roseobacter denitrificans (strain ATCC 33942 / OCh 114) (Erythrobacter sp. (strain OCh 114)), this protein is Adenosylhomocysteinase.